A 539-amino-acid chain; its full sequence is Tetracenomycin B2 monooxygenase-dioxygenase (539 aa).

FAD-binding residues include L15, E35, Q128, and L152. Y231 serves as the catalytic Proton acceptor. D313 contacts FAD.

It belongs to the PheA/TfdB FAD monooxygenase family. The cofactor is FAD.

It carries out the reaction tetracenomycin B2 + 2 NADPH + 2 O2 + 2 H(+) = 8-demethyltetracenomycin C + 2 NADP(+) + H2O. The catalysed reaction is tetracenomycin A2 + 2 NADPH + 2 O2 + 2 H(+) = tetracenomycin C + 2 NADP(+) + H2O. The protein operates within antibiotic biosynthesis. In terms of biological role, involved in the biosynthesis of elloramycin, an antitumor polyketide. In vivo, probably catalyzes the triple hydroxylation of 8-demethyltetracenomycin A2 (tetracenomycin B2) at positions C-4, C-4a and C-12a to give 8-demethyltetracenomycin C (8-DMTC). In vitro, catalyzes the triple hydroxylation of tetracenomycin A2 (TCM A2) to give tetracenomycin C (TCM C). Uses NADPH as an electron donor and requires molecular O(2). This is Tetracenomycin B2 monooxygenase-dioxygenase from Streptomyces olivaceus.